The following is a 235-amino-acid chain: uncharacterized protein (235 aa).

The protein to E.coli YbeU.

This is an uncharacterized protein from Escherichia coli (strain K12).